The chain runs to 183 residues: Orotate phosphoribosyltransferase (183 aa).

5-phospho-alpha-D-ribose 1-diphosphate is bound by residues R100, K101, K104, H106, and 126-134 (EDVVTTGSS). Positions 130 and 158 each coordinate orotate.

Belongs to the purine/pyrimidine phosphoribosyltransferase family. PyrE subfamily. In terms of assembly, homodimer. The cofactor is Mg(2+).

It catalyses the reaction orotidine 5'-phosphate + diphosphate = orotate + 5-phospho-alpha-D-ribose 1-diphosphate. The protein operates within pyrimidine metabolism; UMP biosynthesis via de novo pathway; UMP from orotate: step 1/2. Its function is as follows. Catalyzes the transfer of a ribosyl phosphate group from 5-phosphoribose 1-diphosphate to orotate, leading to the formation of orotidine monophosphate (OMP). The chain is Orotate phosphoribosyltransferase from Aquifex aeolicus (strain VF5).